The following is a 664-amino-acid chain: Protein fem-1 homolog CG6966 (664 aa).

ANK repeat units lie at residues 40-70 (NGATPLVISCRNGHYDIVEYLLTKCRANVEQ), 82-111 (EDAPPLWCAAAAGHLGIVKMLVRRGANVNS), 115-144 (TNSTPLRAACFDGHYEIVKYLVHHGADFEV), 148-177 (HGHTCLMIACYKGHFRIAQYLLSLNADVNR), 181-210 (KGNTALHDCAESGSLQILQLLLKHGATMDV), and 213-242 (YGMTPLLAASVTGHMPIVEHLITLPCVSRE). 2 TPR repeats span residues 245–279 (IHALELLGATYVDRKRDMAAALNLWRRALEERAVE) and 335–368 (SYYIRFRGAHYADAGRFDRCIELWSYALTMQQKI). The interval 433-460 (QQKDQQHPQKQLPAADKSPSCSASSSAS) is disordered. A compositionally biased stretch (low complexity) spans 450–460 (SPSCSASSSAS). ANK repeat units follow at residues 529 to 571 (FDRT…DPNA) and 575 to 605 (AGNTPLHLATMQPYVEPLSHILLEGGAHLDT).

Belongs to the fem-1 family. In terms of assembly, component of a CRL2 E3 ubiquitin-protein ligase complex, also named ECS (Elongin BC-CUL2/5-SOCS-box protein) complex.

It participates in protein modification; protein ubiquitination. Its function is as follows. Substrate-recognition component of a Cul2-RING (CRL2) E3 ubiquitin-protein ligase complex of the DesCEND (destruction via C-end degrons) pathway, which recognizes a C-degron located at the extreme C terminus of target proteins, leading to their ubiquitination and degradation. The C-degron recognized by the DesCEND pathway is usually a motif of less than ten residues and can be present in full-length proteins, truncated proteins or proteolytically cleaved forms. The sequence is that of Protein fem-1 homolog CG6966 from Drosophila melanogaster (Fruit fly).